The sequence spans 1401 residues: Kinesin-like protein KIF27 (1401 aa).

In terms of domain architecture, Kinesin motor spans proline 5–isoleucine 341. Glycine 84–threonine 91 lines the ATP pocket. Coiled coils occupy residues glutamate 352 to cysteine 413 and leucine 489 to leucine 557. Phosphoserine is present on residues serine 643, serine 646, serine 672, serine 675, and serine 704. Residues serine 643–arginine 662 form a disordered region. 4 coiled-coil regions span residues glutamine 705–lysine 886, aspartate 916–glutamate 1070, asparagine 1118–alanine 1154, and glutamate 1190–aspartate 1219. Serine 999 bears the Phosphoserine mark. A compositionally biased stretch (basic and acidic residues) spans glutamate 1259–aspartate 1280. Residues glutamate 1259 to lysine 1332 form a disordered region. Over residues serine 1281 to proline 1292 the composition is skewed to polar residues. Phosphoserine is present on residues serine 1367 and serine 1389.

It belongs to the TRAFAC class myosin-kinesin ATPase superfamily. Kinesin family. KIF27 subfamily. Interacts with STK36. In terms of tissue distribution, testis, pancreatic islet, germ cell tumors and Jurkat T-cells.

The protein resides in the cytoplasm. It is found in the cytoskeleton. The protein localises to the cell projection. Its subcellular location is the cilium. Plays an essential role in motile ciliogenesis. The protein is Kinesin-like protein KIF27 (KIF27) of Homo sapiens (Human).